Here is a 626-residue protein sequence, read N- to C-terminus: (+)-3-carene synthase 2, chloroplastic (626 aa).

Residues 1 to 45 (MSLISAVPLASSCVSKSLISSVREHTALRRAIATLQMSRRGKSVA) constitute a chloroplast transit peptide. Mg(2+) is bound by residues aspartate 377, aspartate 381, and aspartate 529. The short motif at 377–381 (DDMYD) is the DDXXD motif element.

The protein belongs to the terpene synthase family. Tpsd subfamily. Requires Mg(2+) as cofactor. Mn(2+) is required as a cofactor.

It is found in the plastid. The protein resides in the chloroplast. It carries out the reaction (2E)-geranyl diphosphate = (+)-car-3-ene + diphosphate. The protein operates within terpene metabolism; oleoresin biosynthesis. It participates in secondary metabolite biosynthesis; terpenoid biosynthesis. In terms of biological role, monoterpene synthase (TPS) involved in the biosynthesis of monoterpene natural products included in conifer oleoresin secretions and volatile emissions; these compounds contribute to biotic and abiotic stress defense against herbivores and pathogens. Catalyzes the conversion of (2E)-geranyl diphosphate (GPP) to (+)-3-carene. The polypeptide is (+)-3-carene synthase 2, chloroplastic (Pinus banksiana (Jack pine)).